Here is a 284-residue protein sequence, read N- to C-terminus: Distal membrane arm assembly component 2 (284 aa).

The protein belongs to the ATP synthase subunit s family. Associates with mitochondrial complex I assembly intermediates during its biogenesis.

Functionally, involved in the assembly of the mitochondrial membrane respiratory chain NADH dehydrogenase (Complex I). The sequence is that of Distal membrane arm assembly component 2 from Drosophila melanogaster (Fruit fly).